The chain runs to 180 residues: uncharacterized protein (180 aa).

The signal sequence occupies residues 1–24 (MKKKTIFQCVILFFSILNIHVGMA).

In terms of biological role, part of the elfADCG-ycbUVF fimbrial operon, which promotes adhesion of bacteria to different abiotic surfaces. This is an uncharacterized protein from Escherichia coli (strain K12).